A 497-amino-acid polypeptide reads, in one-letter code: MFFRPDFRPRCAKWLIATGLFLMLGACVEKPTTLERVKEDGVLRVITRNSPATYFQDRNGETGFEYELVKRFADDLGVELKIETADNLDDLFDQMNKPGGPVLGAAGLIETSKRKQQARFSHSYLEVTPQVVYRNGQSRPTDPGDLVGKRIVVLKGSAHAEQLAALKAQTPAIEYEESDAVEVVDLLRMVDEGQIDLTLVDSNELAMNQVYFPNVRVAFDLGEAREQRWAVAPGEDNSLLNEINAYLDKVEKNGTLQRLKDRYYGHVDVLGYVGAYTFAQHLQERLPKYEKHFQTSAKKEQVDWRLLAAIGYQESMWQPAVTSKTGVRGLMMLTQNTAQAMGVTNRLDARQSIQGGAKYFAYVKDQLDDKIQEPDRTWLALASYNIGGGHLEDARKLAENEGLNPNKWLDVKKMLPRLAQKKWYSKTRYGYARGGEPVHFVANIRRYYDILTWVTQPQLEGSQVADGNLHVPGVDKTQPPAPTAPVVPASSPEKPAL.

A signal peptide spans 1–29 (MFFRPDFRPRCAKWLIATGLFLMLGACVE). Positions 30–267 (KPTTLERVKE…RLKDRYYGHV (238 aa)) are non-LT domain. Positions 268-497 (DVLGYVGAYT…PASSPEKPAL (230 aa)) are LT domain. E314 is a catalytic residue. Residues 464–497 (VADGNLHVPGVDKTQPPAPTAPVVPASSPEKPAL) are disordered. The span at 486–497 (VVPASSPEKPAL) shows a compositional bias: low complexity.

In the N-terminal section; belongs to the bacterial solute-binding protein 3 family. The protein in the C-terminal section; belongs to the transglycosylase Slt family.

It localises to the cell outer membrane. The catalysed reaction is Exolytic cleavage of the (1-&gt;4)-beta-glycosidic linkage between N-acetylmuramic acid (MurNAc) and N-acetylglucosamine (GlcNAc) residues in peptidoglycan, from either the reducing or the non-reducing ends of the peptidoglycan chains, with concomitant formation of a 1,6-anhydrobond in the MurNAc residue.. Murein-degrading enzyme that degrades murein glycan strands and insoluble, high-molecular weight murein sacculi, with the concomitant formation of a 1,6-anhydromuramoyl product. Lytic transglycosylases (LTs) play an integral role in the metabolism of the peptidoglycan (PG) sacculus. Their lytic action creates space within the PG sacculus to allow for its expansion as well as for the insertion of various structures such as secretion systems and flagella. This Pseudomonas syringae pv. tomato (strain ATCC BAA-871 / DC3000) protein is Membrane-bound lytic murein transglycosylase F.